The following is an 873-amino-acid chain: Putative receptor-like protein kinase At5g39000 (873 aa).

The first 21 residues, 1 to 21, serve as a signal peptide directing secretion; it reads MIRHALLIFSILVSTPIVGEG. At 22–445 the chain is on the extracellular side; that stretch reads ATSTYEPTDV…KNKSHILPIT (424 aa). Residues N49, N64, N138, N168, N216, N266, N300, N340, and N437 are each glycosylated (N-linked (GlcNAc...) asparagine). A helical transmembrane segment spans residues 446-466; that stretch reads LAVVGSLVVLAMFVVGVLVIM. The Cytoplasmic segment spans residues 467–873; sequence KKKKKSKPST…FSEINEPKAR (407 aa). Residues 472–494 are disordered; that stretch reads SKPSTNSSWCPLPHGTDSTNTKP. Residues 518-803 form the Protein kinase domain; that stretch reads FEDKLIIGVG…EFALQLHETA (286 aa). ATP-binding positions include 524–532 and K547; that span reads IGVGGFGSV. D646 serves as the catalytic Proton acceptor. The segment at 813–843 is disordered; sequence LDLMPSGEVGTTTDGEDDLFSRTTGHVGKST. Positions 833–843 are enriched in polar residues; it reads SRTTGHVGKST.

Belongs to the protein kinase superfamily. Ser/Thr protein kinase family.

It localises to the membrane. The sequence is that of Putative receptor-like protein kinase At5g39000 from Arabidopsis thaliana (Mouse-ear cress).